Here is a 334-residue protein sequence, read N- to C-terminus: Oligopeptide transport ATP-binding protein OppF (334 aa).

The 254-residue stretch at 12-265 (LEIADLKVHF…PLHPYTRALM (254 aa)) folds into the ABC transporter domain. 57–64 (GESGCGKS) is an ATP binding site.

Belongs to the ABC transporter superfamily. As to quaternary structure, the complex is composed of two ATP-binding proteins (OppD and OppF), two transmembrane proteins (OppB and OppC) and a solute-binding protein (OppA or MppA).

Its subcellular location is the cell inner membrane. It carries out the reaction a [peptide](out) + ATP + H2O = a [peptide](in) + ADP + phosphate + H(+). The enzyme catalyses L-alanyl-gamma-D-glutamyl-meso-2,6-diaminopimelate(out) + ATP + H2O = L-alanyl-gamma-D-glutamyl-meso-2,6-diaminopimelate(in) + ADP + phosphate + H(+). Functionally, part of the ABC transporter complex OppABCDF involved in the uptake of oligopeptides and of the ABC transporter complex MppA-OppBCDF involved in the uptake of the cell wall murein tripeptide L-alanyl-gamma-D-glutamyl-meso-diaminopimelate. Probably responsible for energy coupling to the transport system. Plays an important nutritional role and is involved in the recycling of cell wall peptides. The polypeptide is Oligopeptide transport ATP-binding protein OppF (oppF) (Escherichia coli (strain K12)).